We begin with the raw amino-acid sequence, 431 residues long: Probable oxidoreductase OrdL (431 aa).

The polypeptide is Probable oxidoreductase OrdL (ordL) (Haemophilus influenzae (strain ATCC 51907 / DSM 11121 / KW20 / Rd)).